Here is a 273-residue protein sequence, read N- to C-terminus: 2,3,4,5-tetrahydropyridine-2,6-dicarboxylate N-succinyltransferase (273 aa).

Residues Arg-104 and Asp-141 each coordinate substrate.

Belongs to the transferase hexapeptide repeat family. In terms of assembly, homotrimer.

It is found in the cytoplasm. The enzyme catalyses (S)-2,3,4,5-tetrahydrodipicolinate + succinyl-CoA + H2O = (S)-2-succinylamino-6-oxoheptanedioate + CoA. The protein operates within amino-acid biosynthesis; L-lysine biosynthesis via DAP pathway; LL-2,6-diaminopimelate from (S)-tetrahydrodipicolinate (succinylase route): step 1/3. This chain is 2,3,4,5-tetrahydropyridine-2,6-dicarboxylate N-succinyltransferase, found in Thioalkalivibrio sulfidiphilus (strain HL-EbGR7).